Consider the following 473-residue polypeptide: Photosystem II CP43 reaction center protein (473 aa).

A propeptide spanning residues 1–14 (MKILYSLRRFYHVE) is cleaved from the precursor. Thr-15 bears the N-acetylthreonine mark. Position 15 is a phosphothreonine (Thr-15). The next 5 helical transmembrane spans lie at 69 to 93 (LFEV…PHLA), 134 to 155 (LLGP…KDRN), 178 to 200 (KALY…RKIT), 255 to 275 (KPFA…LSYS), and 291 to 312 (WFNN…ASQA). Position 367 (Glu-367) interacts with [CaMn4O5] cluster. The chain crosses the membrane as a helical span at residues 447–471 (RARAAAAGFEKGIDRDLEPVLYMTP).

Belongs to the PsbB/PsbC family. PsbC subfamily. PSII is composed of 1 copy each of membrane proteins PsbA, PsbB, PsbC, PsbD, PsbE, PsbF, PsbH, PsbI, PsbJ, PsbK, PsbL, PsbM, PsbT, PsbX, PsbY, PsbZ, Psb30/Ycf12, at least 3 peripheral proteins of the oxygen-evolving complex and a large number of cofactors. It forms dimeric complexes. The cofactor is Binds multiple chlorophylls and provides some of the ligands for the Ca-4Mn-5O cluster of the oxygen-evolving complex. It may also provide a ligand for a Cl- that is required for oxygen evolution. PSII binds additional chlorophylls, carotenoids and specific lipids..

It localises to the plastid. The protein resides in the chloroplast thylakoid membrane. One of the components of the core complex of photosystem II (PSII). It binds chlorophyll and helps catalyze the primary light-induced photochemical processes of PSII. PSII is a light-driven water:plastoquinone oxidoreductase, using light energy to abstract electrons from H(2)O, generating O(2) and a proton gradient subsequently used for ATP formation. The chain is Photosystem II CP43 reaction center protein from Oryza nivara (Indian wild rice).